We begin with the raw amino-acid sequence, 283 residues long: Bifunctional protein FolD (283 aa).

NADP(+) is bound by residues 165 to 167 (GRS) and Ser-190.

It belongs to the tetrahydrofolate dehydrogenase/cyclohydrolase family. As to quaternary structure, homodimer.

It carries out the reaction (6R)-5,10-methylene-5,6,7,8-tetrahydrofolate + NADP(+) = (6R)-5,10-methenyltetrahydrofolate + NADPH. The enzyme catalyses (6R)-5,10-methenyltetrahydrofolate + H2O = (6R)-10-formyltetrahydrofolate + H(+). It participates in one-carbon metabolism; tetrahydrofolate interconversion. In terms of biological role, catalyzes the oxidation of 5,10-methylenetetrahydrofolate to 5,10-methenyltetrahydrofolate and then the hydrolysis of 5,10-methenyltetrahydrofolate to 10-formyltetrahydrofolate. This chain is Bifunctional protein FolD, found in Methylibium petroleiphilum (strain ATCC BAA-1232 / LMG 22953 / PM1).